A 37-amino-acid polypeptide reads, in one-letter code: AICTGADRPCAACCPCCPGTSCKAESNGVSYCRKDEP.

4 disulfide bridges follow: Cys3–Cys17, Cys10–Cys22, Cys13–Cys14, and Cys16–Cys32.

Belongs to the neurotoxin 11 (kappa toxin) family. As to expression, expressed by the venom gland.

It localises to the secreted. Functionally, this excitatory toxin inhibits insect calcium-activated potassium (KCa) channels (Slo-type). Pan-neuronal expression in Drosophila is lethal but flies engineered to express the toxin only in clock neurons have defects in circadian rhythm but a normal lifespan. The chain is Lambda-hexatoxin-Hv1c from Hadronyche versuta (Blue mountains funnel-web spider).